The following is a 1123-amino-acid chain: Eukaryotic translation initiation factor 2-alpha kinase PK4 (1123 aa).

Residues Met-1–Lys-30 are disordered. A compositionally biased stretch (basic and acidic residues) spans Asn-21–Lys-30. Residues Ile-245 to Val-253 and Lys-270 contribute to the ATP site. Disordered stretches follow at residues Phe-409–Gly-493, Arg-572–Asp-609, and Glu-742–Ile-800. Residues Lys-419 to His-428 show a composition bias toward basic and acidic residues. Residues His-455–Ile-477 are compositionally biased toward basic residues. 5 tandem repeats follow at residues Asp-576 to Gly-582, Asp-583 to Gly-589, Asp-590 to Gly-596, Asp-597 to Gly-603, and Asp-604 to Asp-610. Residues Asp-576–Asp-610 are 5 X 7 AA tandem repeat of D-K-N-[GE]-L-D-[GD]. A Protein kinase domain is found at Thr-678–Leu-1049. Positions Asn-743–Asn-754 are enriched in acidic residues. Catalysis depends on Asp-886, which acts as the Proton acceptor. At Thr-953 the chain carries Phosphothreonine.

This sequence belongs to the protein kinase superfamily. Ser/Thr protein kinase family. GCN2 subfamily. As to quaternary structure, may form oligomers in response to stress; oligomerization may result in catalytic activity. Interacts with BIP; the interaction is disrupted in response to stress. Auto-phosphorylated.

The protein resides in the endoplasmic reticulum membrane. The catalysed reaction is L-seryl-[protein] + ATP = O-phospho-L-seryl-[protein] + ADP + H(+). It catalyses the reaction L-threonyl-[protein] + ATP = O-phospho-L-threonyl-[protein] + ADP + H(+). Its activity is regulated as follows. Dissociation from BIP and oligomerization, may results autophosphorylation and kinase activity induction. Functionally, during the asexual blood stage, phosphorylates translation factor eIF2alpha in late schizonts resulting in protein translation inhibition. Plays a role in trophozoite differentiation into schizonts. The sequence is that of Eukaryotic translation initiation factor 2-alpha kinase PK4 from Plasmodium falciparum.